Consider the following 93-residue polypeptide: Large ribosomal subunit protein uL23cz/uL23cy (93 aa).

The protein belongs to the universal ribosomal protein uL23 family. Part of the 50S ribosomal subunit.

Its subcellular location is the plastid. The protein localises to the chloroplast. In terms of biological role, binds to 23S rRNA. This is Large ribosomal subunit protein uL23cz/uL23cy (rpl23-A) from Coffea arabica (Arabian coffee).